An 853-amino-acid chain; its full sequence is DNA mismatch repair protein MutS (853 aa).

614-621 (GPNMGGKS) is a binding site for ATP.

This sequence belongs to the DNA mismatch repair MutS family.

This protein is involved in the repair of mismatches in DNA. It is possible that it carries out the mismatch recognition step. This protein has a weak ATPase activity. The chain is DNA mismatch repair protein MutS from Escherichia coli O1:K1 / APEC.